Consider the following 378-residue polypeptide: Probable tRNA sulfurtransferase (378 aa).

A THUMP domain is found at 51-153 (DANLEKLQYV…SDKTYLFSKT (103 aa)). ATP is bound by residues 171 to 172 (LM), 196 to 197 (SF), R253, G275, and Q284.

Belongs to the ThiI family.

It localises to the cytoplasm. The enzyme catalyses [ThiI sulfur-carrier protein]-S-sulfanyl-L-cysteine + a uridine in tRNA + 2 reduced [2Fe-2S]-[ferredoxin] + ATP + H(+) = [ThiI sulfur-carrier protein]-L-cysteine + a 4-thiouridine in tRNA + 2 oxidized [2Fe-2S]-[ferredoxin] + AMP + diphosphate. The catalysed reaction is [ThiS sulfur-carrier protein]-C-terminal Gly-Gly-AMP + S-sulfanyl-L-cysteinyl-[cysteine desulfurase] + AH2 = [ThiS sulfur-carrier protein]-C-terminal-Gly-aminoethanethioate + L-cysteinyl-[cysteine desulfurase] + A + AMP + 2 H(+). Its pathway is cofactor biosynthesis; thiamine diphosphate biosynthesis. In terms of biological role, catalyzes the ATP-dependent transfer of a sulfur to tRNA to produce 4-thiouridine in position 8 of tRNAs, which functions as a near-UV photosensor. Also catalyzes the transfer of sulfur to the sulfur carrier protein ThiS, forming ThiS-thiocarboxylate. This is a step in the synthesis of thiazole, in the thiamine biosynthesis pathway. The sulfur is donated as persulfide by IscS. This is Probable tRNA sulfurtransferase from Mycoplasmopsis agalactiae (strain NCTC 10123 / CIP 59.7 / PG2) (Mycoplasma agalactiae).